The chain runs to 1368 residues: DNA-directed RNA polymerase subunit beta (1368 aa).

The protein belongs to the RNA polymerase beta chain family. The RNAP catalytic core consists of 2 alpha, 1 beta, 1 beta' and 1 omega subunit. When a sigma factor is associated with the core the holoenzyme is formed, which can initiate transcription.

It carries out the reaction RNA(n) + a ribonucleoside 5'-triphosphate = RNA(n+1) + diphosphate. Its function is as follows. DNA-dependent RNA polymerase catalyzes the transcription of DNA into RNA using the four ribonucleoside triphosphates as substrates. This is DNA-directed RNA polymerase subunit beta from Burkholderia lata (strain ATCC 17760 / DSM 23089 / LMG 22485 / NCIMB 9086 / R18194 / 383).